Reading from the N-terminus, the 55-residue chain is CKKMVGAYFEGELCADACLKFKGKMCPTARTSPPSRPSSTSLSSRCCSIKSLCKA.

Belongs to the insect eclosion hormone family.

It is found in the secreted. Functionally, neuropeptide that triggers the performance of ecdysis behaviors at the end of a molt. It triggers adult behavior patterns: larval, pupal and adult ecdysis, and plasticization during the molt. This is Eclosion hormone from Romalea microptera (Eastern lubber grasshopper).